We begin with the raw amino-acid sequence, 302 residues long: Nucleotide-binding protein STH186 (302 aa).

15 to 22 (GMSGAGKT) contributes to the ATP binding site. 66–69 (DIRG) lines the GTP pocket.

This sequence belongs to the RapZ-like family.

In terms of biological role, displays ATPase and GTPase activities. This Symbiobacterium thermophilum (strain DSM 24528 / JCM 14929 / IAM 14863 / T) protein is Nucleotide-binding protein STH186.